We begin with the raw amino-acid sequence, 344 residues long: Arginine N-succinyltransferase (344 aa).

Leu-125 contacts succinyl-CoA. His-229 acts as the Proton donor in catalysis.

It belongs to the arginine N-succinyltransferase family.

It carries out the reaction succinyl-CoA + L-arginine = N(2)-succinyl-L-arginine + CoA + H(+). It participates in amino-acid degradation; L-arginine degradation via AST pathway; L-glutamate and succinate from L-arginine: step 1/5. Functionally, catalyzes the transfer of succinyl-CoA to arginine to produce N(2)-succinylarginine. The polypeptide is Arginine N-succinyltransferase (Citrobacter koseri (strain ATCC BAA-895 / CDC 4225-83 / SGSC4696)).